We begin with the raw amino-acid sequence, 122 residues long: MIQMQTRLNVADNSGAKEVMCVKVLGGSKRRVASIGDVIVVSIKEALPNAKVKKGDVAKAVVVRTVAKLRRPDGSYIRFDDNSAVLINASKEPIGTRIFGPVARELRAKSFVKIVSLAPEVL.

Belongs to the universal ribosomal protein uL14 family. Part of the 50S ribosomal subunit. Forms a cluster with proteins L3 and L19. In the 70S ribosome, L14 and L19 interact and together make contacts with the 16S rRNA in bridges B5 and B8.

In terms of biological role, binds to 23S rRNA. Forms part of two intersubunit bridges in the 70S ribosome. This Bdellovibrio bacteriovorus (strain ATCC 15356 / DSM 50701 / NCIMB 9529 / HD100) protein is Large ribosomal subunit protein uL14.